A 322-amino-acid polypeptide reads, in one-letter code: 4-diphosphocytidyl-2-C-methyl-D-erythritol kinase (322 aa).

The active site involves K25. 110–120 is a binding site for ATP; it reads PVAGGMAGGSA. D152 is an active-site residue.

This sequence belongs to the GHMP kinase family. IspE subfamily.

The enzyme catalyses 4-CDP-2-C-methyl-D-erythritol + ATP = 4-CDP-2-C-methyl-D-erythritol 2-phosphate + ADP + H(+). The protein operates within isoprenoid biosynthesis; isopentenyl diphosphate biosynthesis via DXP pathway; isopentenyl diphosphate from 1-deoxy-D-xylulose 5-phosphate: step 3/6. Catalyzes the phosphorylation of the position 2 hydroxy group of 4-diphosphocytidyl-2C-methyl-D-erythritol. The chain is 4-diphosphocytidyl-2-C-methyl-D-erythritol kinase from Mycolicibacterium gilvum (strain PYR-GCK) (Mycobacterium gilvum (strain PYR-GCK)).